The following is a 407-amino-acid chain: Argininosuccinate synthase (407 aa).

10–18 (AYSGGLDTS) lines the ATP pocket. L-citrulline is bound by residues Tyr-88 and Ser-93. Gly-118 serves as a coordination point for ATP. L-aspartate-binding residues include Thr-120, Asn-124, and Asp-125. Residue Asn-124 coordinates L-citrulline. L-citrulline contacts are provided by Arg-128, Ser-177, Ser-186, Glu-263, and Tyr-275.

Belongs to the argininosuccinate synthase family. Type 1 subfamily. Homotetramer.

It is found in the cytoplasm. It catalyses the reaction L-citrulline + L-aspartate + ATP = 2-(N(omega)-L-arginino)succinate + AMP + diphosphate + H(+). It participates in amino-acid biosynthesis; L-arginine biosynthesis; L-arginine from L-ornithine and carbamoyl phosphate: step 2/3. The chain is Argininosuccinate synthase from Clostridium botulinum (strain Alaska E43 / Type E3).